The following is a 321-amino-acid chain: 37 kDa cell surface protein (321 aa).

It is found in the secreted. The protein localises to the cell wall. This Candida albicans (Yeast) protein is 37 kDa cell surface protein (CSP37).